We begin with the raw amino-acid sequence, 428 residues long: D-amino acid dehydrogenase (428 aa).

An FAD-binding site is contributed by Val-3–Tyr-17.

This sequence belongs to the DadA oxidoreductase family. It depends on FAD as a cofactor.

It carries out the reaction a D-alpha-amino acid + A + H2O = a 2-oxocarboxylate + AH2 + NH4(+). The protein operates within amino-acid degradation; D-alanine degradation; NH(3) and pyruvate from D-alanine: step 1/1. Its function is as follows. Oxidative deamination of D-amino acids. The protein is D-amino acid dehydrogenase of Burkholderia mallei (strain NCTC 10247).